Consider the following 358-residue polypeptide: Ubiquitin thioesterase OTU1 (358 aa).

Positions F5–A87 constitute a Ubiquitin-like domain. The tract at residues K8–L94 is UBX-like. The tract at residues K83–A108 is disordered. The span at P89–T102 shows a compositional bias: polar residues. The 125-residue stretch at L161 to E285 folds into the OTU domain. Positions V166–C172 are cys-loop. Residue D169 is part of the active site. Residue C172 is the Nucleophile of the active site. The tract at residues I224 to I234 is variable-loop. Residues F274–H278 form a his-loop region. I277 provides a ligand contact to substrate. Residue H278 is part of the active site. Residues M301–Q306 are S2 site. The C2H2-type zinc finger occupies L328–H352. H352 is a catalytic residue.

The catalysed reaction is Thiol-dependent hydrolysis of ester, thioester, amide, peptide and isopeptide bonds formed by the C-terminal Gly of ubiquitin (a 76-residue protein attached to proteins as an intracellular targeting signal).. Functionally, hydrolase that can remove conjugated ubiquitin from proteins and may therefore play an important regulatory role at the level of protein turnover by preventing degradation. The protein is Ubiquitin thioesterase OTU1 of Drosophila pseudoobscura pseudoobscura (Fruit fly).